Consider the following 291-residue polypeptide: N-acetylmannosamine kinase (291 aa).

Residues 5–12 (AIDIGGTK) and 132–139 (GVGGGVVS) each bind ATP. 4 residues coordinate Zn(2+): His-156, Cys-166, Cys-168, and Cys-173.

The protein belongs to the ROK (NagC/XylR) family. NanK subfamily. As to quaternary structure, homodimer.

The catalysed reaction is an N-acyl-D-mannosamine + ATP = an N-acyl-D-mannosamine 6-phosphate + ADP + H(+). It functions in the pathway amino-sugar metabolism; N-acetylneuraminate degradation; D-fructose 6-phosphate from N-acetylneuraminate: step 2/5. Catalyzes the phosphorylation of N-acetylmannosamine (ManNAc) to ManNAc-6-P. This Escherichia coli O139:H28 (strain E24377A / ETEC) protein is N-acetylmannosamine kinase.